The following is a 445-amino-acid chain: MTAGATLPTAASAALFERARAVTPGGVNSPVRAFNAVGGTPRFIRSARGAWLTDADGNEYVDLICSWGPMLLGHAHPEVQAAVSAAVARGTSYGAPTEPEVELAEEIAARAPVERVRFVSSGTEATMSAIRLARGFTGRDVVVKFAGCYHGHVDSLLASAGSGLATFAVPGTPGVPESSTALTLVLPYNDRAAVEKAFAEHGDRIACLITEAAPGNMGVVPPDADGSGGGFNGFLAETCARHGALFVSDEVMTGFRASRQGQWGLDGAVEGWRPDLMTFGKVMGGGFPAAAFGGRADVMSRLAPEGPVYQAGTLSGNPIATTAGLATLRLATDDVYAHIGAAADTIKTAASDALSRAGVEHVVQAAGTMFSVFLTAGPVRDFADASRTDVAAYAAFFHAMLDQGVYLPPSAYEAWFLSSAHDDRAVQTVLDALPTAARAAAAAQT.

Lys-281 carries the N6-(pyridoxal phosphate)lysine modification.

The protein belongs to the class-III pyridoxal-phosphate-dependent aminotransferase family. HemL subfamily. Homodimer. It depends on pyridoxal 5'-phosphate as a cofactor.

Its subcellular location is the cytoplasm. The catalysed reaction is (S)-4-amino-5-oxopentanoate = 5-aminolevulinate. It functions in the pathway porphyrin-containing compound metabolism; protoporphyrin-IX biosynthesis; 5-aminolevulinate from L-glutamyl-tRNA(Glu): step 2/2. The sequence is that of Glutamate-1-semialdehyde 2,1-aminomutase from Nocardioides sp. (strain ATCC BAA-499 / JS614).